Consider the following 123-residue polypeptide: MADLQKIVDDLSSLTVLEAAELAKLLEEKWGVSAAAAVAVAAAPGAAAAAVEEKTEFTVMLAAAGDKKIEVIKEVRAITGLGLKEAKDLVEGAPKPVKEGVNKEEADKLKAQLEKAGAKVELK.

It belongs to the bacterial ribosomal protein bL12 family. In terms of assembly, homodimer. Part of the ribosomal stalk of the 50S ribosomal subunit. Forms a multimeric L10(L12)X complex, where L10 forms an elongated spine to which 2 to 4 L12 dimers bind in a sequential fashion. Binds GTP-bound translation factors.

Its function is as follows. Forms part of the ribosomal stalk which helps the ribosome interact with GTP-bound translation factors. Is thus essential for accurate translation. In Rhodopseudomonas palustris (strain HaA2), this protein is Large ribosomal subunit protein bL12.